The chain runs to 507 residues: MGPPLAQELTQACNQPLAATSNLQPDDGYKIELRAENGVDKYPAKQHARKVAAQIRQGKGLIFLMGQKSTLHEDSDQERSLRQRRYFFYLSGVDEADCDLTYDIKTDKLTLYVPDFDLRRAIWMGPTLERKSALQKFDVDEVNYHSALDEDVKKWAKNQGPGSTIYLLHGSQGPTDNPSNVIIDTKTLKLAMDACRVIKDEHEIQLIRRANDISAAAHIEILRGITSMSNESHVEGSFLNTCVSLGAHKQAYQIIAASGSNAATLHYSKNNEPLRGRQFVCLDAGAEWNCYASDVTRTFPITHQWPSIEAKQIYQLVQEMQESCIALVKEGVRYLDLHFLAHNILIKGFLTLGIFKGGTLDEVKKSGASLLFFPHGLGHYIGLEVHDVSPQSIMAQGINDDSNNMLILPTCVSPCTTSSPALTSGMVITIEPGIYFSQLALENAKPEQLKYIDMARVKNYMAVGGVRIEDDILVTKTGHENLTKVPKGDDMLEIIRQGKKGNDSHHV.

Asp-283, Asp-294, Glu-431, and Glu-469 together coordinate Mn(2+).

It belongs to the peptidase M24B family. Requires Mn(2+) as cofactor.

It carries out the reaction Release of any N-terminal amino acid, including proline, that is linked to proline, even from a dipeptide or tripeptide.. In terms of biological role, catalyzes the removal of a penultimate prolyl residue from the N-termini of peptides. This Ajellomyces capsulatus (strain NAm1 / WU24) (Darling's disease fungus) protein is Probable Xaa-Pro aminopeptidase HCAG_02413.